The primary structure comprises 172 residues: Putative phosphoesterase BCG9842_B4061 (172 aa).

Catalysis depends on H34, which acts as the Proton donor. 2 short sequence motifs (HXTX) span residues 34–37 (HITL) and 115–118 (HLTI). Catalysis depends on H115, which acts as the Proton acceptor.

This sequence belongs to the 2H phosphoesterase superfamily. YjcG family.

The protein is Putative phosphoesterase BCG9842_B4061 of Bacillus cereus (strain G9842).